The primary structure comprises 1314 residues: Phosphoribosylformylglycinamidine synthase (1314 aa).

Residues 307–318 (GAATGAGGEIRD) and A674 contribute to the ATP site. Residues D675, E714, N718, and D880 each contribute to the Mg(2+) site. S882 is a binding site for ATP. A Glutamine amidotransferase type-1 domain is found at 1063 to 1314 (IAILREQGVN…LFAGARKALG (252 aa)). Residue C1156 is the Nucleophile of the active site. Active-site residues include H1279 and E1281.

The protein in the N-terminal section; belongs to the FGAMS family. Monomer.

The protein resides in the cytoplasm. It carries out the reaction N(2)-formyl-N(1)-(5-phospho-beta-D-ribosyl)glycinamide + L-glutamine + ATP + H2O = 2-formamido-N(1)-(5-O-phospho-beta-D-ribosyl)acetamidine + L-glutamate + ADP + phosphate + H(+). The protein operates within purine metabolism; IMP biosynthesis via de novo pathway; 5-amino-1-(5-phospho-D-ribosyl)imidazole from N(2)-formyl-N(1)-(5-phospho-D-ribosyl)glycinamide: step 1/2. Phosphoribosylformylglycinamidine synthase involved in the purines biosynthetic pathway. Catalyzes the ATP-dependent conversion of formylglycinamide ribonucleotide (FGAR) and glutamine to yield formylglycinamidine ribonucleotide (FGAM) and glutamate. The protein is Phosphoribosylformylglycinamidine synthase of Neisseria gonorrhoeae (strain ATCC 700825 / FA 1090).